A 583-amino-acid polypeptide reads, in one-letter code: Aspartate--tRNA ligase (583 aa).

Glutamate 174 is an L-aspartate binding site. The segment at 198-201 is aspartate; it reads QITK. An L-aspartate-binding site is contributed by arginine 220. Residues 220-222 and glutamine 229 each bind ATP; that span reads RDE. Histidine 443 is an L-aspartate binding site. Position 477 (glutamate 477) interacts with ATP. Position 484 (arginine 484) interacts with L-aspartate. An ATP-binding site is contributed by 529–532; sequence GLDR.

Belongs to the class-II aminoacyl-tRNA synthetase family. Type 1 subfamily. Homodimer.

It localises to the cytoplasm. It catalyses the reaction tRNA(Asp) + L-aspartate + ATP = L-aspartyl-tRNA(Asp) + AMP + diphosphate. Its function is as follows. Catalyzes the attachment of L-aspartate to tRNA(Asp) in a two-step reaction: L-aspartate is first activated by ATP to form Asp-AMP and then transferred to the acceptor end of tRNA(Asp). The polypeptide is Aspartate--tRNA ligase (Streptococcus thermophilus (strain ATCC BAA-491 / LMD-9)).